The sequence spans 213 residues: MKDTAKHQGLRNQLVTTLEQKGITDRAVLDAIKKIPRHLFLNSSFEDFAYQDKAFPIGAGQTISQPYTVAFQSQLLEVKKDHKILEIGTGSGYQTAVLFMLGAKVYTVERQSELFKTTSNLFPKLNIRPKHVTFGDGYKGLPNFAPFDSIIVTAGAPFIPQPLMAQLKIGGRLVIPLGEDVQIMTLLIRKNETQFEKHEFGEFRFVPLLEDKN.

The active site involves S64.

Belongs to the methyltransferase superfamily. L-isoaspartyl/D-aspartyl protein methyltransferase family.

Its subcellular location is the cytoplasm. It carries out the reaction [protein]-L-isoaspartate + S-adenosyl-L-methionine = [protein]-L-isoaspartate alpha-methyl ester + S-adenosyl-L-homocysteine. In terms of biological role, catalyzes the methyl esterification of L-isoaspartyl residues in peptides and proteins that result from spontaneous decomposition of normal L-aspartyl and L-asparaginyl residues. It plays a role in the repair and/or degradation of damaged proteins. This is Protein-L-isoaspartate O-methyltransferase from Flavobacterium johnsoniae (strain ATCC 17061 / DSM 2064 / JCM 8514 / BCRC 14874 / CCUG 350202 / NBRC 14942 / NCIMB 11054 / UW101) (Cytophaga johnsonae).